Here is a 562-residue protein sequence, read N- to C-terminus: ATP-dependent RNA helicase dbp2 (562 aa).

The Q motif motif lies at 132-160; that stretch reads ETFDEAGFPRYVMDEVKAQGFPAPTAIQS. The 176-residue stretch at 163–338 folds into the Helicase ATP-binding domain; the sequence is WPMALSGRDV…ADFLTDFIQV (176 aa). An ATP-binding site is contributed by 176–183; the sequence is AETGSGKT. The DEAD box motif lies at 286 to 289; sequence DEAD. In terms of domain architecture, Helicase C-terminal spans 370-515; sequence HLEKIMEGRE…QIDPRLAEMA (146 aa). The tract at residues 526–548 is RNA-binding RGG-box; that stretch reads GGYRGRGGGGWRGGRGGGGGGGS. Residues 536–550 show a composition bias toward gly residues; it reads WRGGRGGGGGGGSVG. The segment at 536 to 562 is disordered; that stretch reads WRGGRGGGGGGGSVGGANALPLNNRRW.

This sequence belongs to the DEAD box helicase family. DDX5/DBP2 subfamily. Associates with polysomes.

It localises to the cytoplasm. The protein resides in the nucleus. It carries out the reaction ATP + H2O = ADP + phosphate + H(+). In terms of biological role, ATP-dependent RNA helicase involved nonsense-mediated mRNA decay and ribosome biogenesis through rRNA processing. The sequence is that of ATP-dependent RNA helicase dbp2 (drh-1) from Neurospora crassa (strain ATCC 24698 / 74-OR23-1A / CBS 708.71 / DSM 1257 / FGSC 987).